Consider the following 388-residue polypeptide: Lysocardiolipin acyltransferase 1 (388 aa).

2 helical membrane passes run 9–29 (FLLFLLLGSVFGSVFMLGPLL) and 46–66 (IVATWLTLPVALLELVLGVKV). The short motif at 85–90 (HRTRLD) is the HXXXXD motif element. 2 consecutive transmembrane segments (helical) span residues 321 to 341 (IILVASLLYWSVFITAACASL) and 342 to 362 (CLCPPAQFYFLFMVVFFLCQQ).

This sequence belongs to the 1-acyl-sn-glycerol-3-phosphate acyltransferase family.

Its subcellular location is the endoplasmic reticulum membrane. The catalysed reaction is a 1-acyl-sn-glycero-3-phosphate + an acyl-CoA = a 1,2-diacyl-sn-glycero-3-phosphate + CoA. The enzyme catalyses a 1-acyl-sn-glycero-3-phospho-(1D-myo-inositol) + an acyl-CoA = a 1,2-diacyl-sn-glycero-3-phospho-(1D-myo-inositol) + CoA. It catalyses the reaction 1-acyl-sn-glycero-3-phospho-(1'-sn-glycerol) + an acyl-CoA = a 1,2-diacyl-sn-glycero-3-phospho-(1'-sn-glycerol) + CoA. It carries out the reaction 1-hexadecanoyl-sn-glycero-3-phosphate + (9Z)-octadecenoyl-CoA = 1-hexadecanoyl-2-(9Z-octadecenoyl)-sn-glycero-3-phosphate + CoA. The catalysed reaction is 1-(9Z-octadecenoyl)-sn-glycero-3-phosphate + (9Z)-octadecenoyl-CoA = 1,2-di-(9Z-octadecenoyl)-sn-glycero-3-phosphate + CoA. The enzyme catalyses 1-(9Z,12Z)-octadecadienoyl-sn-glycero-3-phosphate + (9Z)-octadecenoyl-CoA = 1-(9Z,12Z)-octadecadienoyl-2-(9Z)-octadecenoyl-sn-glycero-3-phosphate + CoA. It catalyses the reaction 1-(9Z,12Z,15Z)-octadecatrienoyl-sn-glycero-3-phosphate + (9Z)-octadecenoyl-CoA = 1-(9Z,12Z,15Z)-octadecatrienoyl-2-(9Z)-octadecenoyl-sn-glycero-3-phosphate + CoA. It carries out the reaction 1-(9Z-octadecenoyl)-sn-glycero-3-phosphate + hexadecanoyl-CoA = 1-(9Z)-octadecenoyl-2-hexadecanoyl-sn-glycero-3-phosphate + CoA. The catalysed reaction is 1-(9Z-octadecenoyl)-sn-glycero-3-phosphate + octadecanoyl-CoA = 1-(9Z-octadecenoyl)-2-octadecanoyl-sn-glycero-3-phosphate + CoA. The enzyme catalyses 1-acyl-sn-glycero-3-phospho-(1'-sn-glycerol) + (9Z)-octadecenoyl-CoA = 1-acyl-2-(9Z-octadecenoyl)-sn-glycero-3-phospho-(1'-sn-glycerol) + CoA. It catalyses the reaction a 1-acyl-sn-glycero-3-phospho-(1D-myo-inositol) + (9Z)-octadecenoyl-CoA = a 1-acyl-2-(9Z-octadecenoyl)-sn-glycero-3-phospho-(1D-myo-inositol) + CoA. It carries out the reaction 1-hexadecanoyl-sn-glycero-3-phospho-(1D-myo-inositol) + hexadecanoyl-CoA = 1,2-dihexadecanoyl-sn-glycero-3-phospho-(1D-myo-inositol) + CoA. The catalysed reaction is 1-hexadecanoyl-sn-glycero-3-phospho-(1D-myo-inositol) + octadecanoyl-CoA = 1-hexadecanoyl-2-octadecanoyl-sn-glycero-3-phospho-(1D-myo-inositol) + CoA. The enzyme catalyses 1-hexadecanoyl-sn-glycero-3-phospho-(1D-myo-inositol) + (9Z)-octadecenoyl-CoA = 1-hexadecanoyl-2-(9Z-octadecenoyl)-sn-glycero-3-phospho-(1D-myo-inositol) + CoA. It catalyses the reaction 1-hexadecanoyl-sn-glycero-3-phospho-(1D-myo-inositol) + (9Z,12Z)-octadecadienoyl-CoA = 1-hexadecanoyl-2-(9Z,12Z-octadecadienoyl)-sn-glycero-3-phospho-(1D-myo-inositol) + CoA. It carries out the reaction 1-hexadecanoyl-sn-glycero-3-phospho-(1D-myo-inositol) + (5Z,8Z,11Z,14Z)-eicosatetraenoyl-CoA = 1-hexadecanoyl-2-(5Z,8Z,11Z,14Z-eicosatetraenoyl)-sn-glycero-3-phospho-D-myo-inositol + CoA. The catalysed reaction is 1-hexadecanoyl-sn-glycero-3-phospho-(1'-sn-glycerol) + hexadecanoyl-CoA = 1,2-dihexadecanoyl-sn-glycero-3-phospho-(1'-sn-glycerol) + CoA. The enzyme catalyses 1-hexadecanoyl-sn-glycero-3-phospho-(1'-sn-glycerol) + octadecanoyl-CoA = 1-hexadecanoyl-2-octadecanoyl-sn-glycero-3-phospho-(1'-sn-glycerol) + CoA. It catalyses the reaction 1-hexadecanoyl-sn-glycero-3-phospho-(1'-sn-glycerol) + (9Z)-octadecenoyl-CoA = 1-hexadecanoyl-2-(9Z-octadecenoyl)-sn-glycero-3-phospho-(1'-sn-glycerol) + CoA. It carries out the reaction 1-hexadecanoyl-sn-glycero-3-phospho-(1'-sn-glycerol) + (9Z,12Z)-octadecadienoyl-CoA = 1-hexadecanoyl-2-(9Z,12Z-octadecadienoyl)-sn-glycero-3-phospho-(1'-sn-glycerol) + CoA. The catalysed reaction is 1-tetradecanoyl-sn-glycero-3-phospho-(1'-sn-glycerol) + (9Z)-octadecenoyl-CoA = 1-tetradecanoyl-2-(9Z-octadecenoyl)-sn-glycero-3-phospho-(1'-sn-glycerol) + CoA. The enzyme catalyses 1-octadecanoyl-sn-glycero-3-phospho-(1'-sn-glycerol) + (9Z)-octadecenoyl-CoA = 1-octadecanoyl-2-(9Z-octadecenoyl)-sn-glycero-3-phospho-(1'-sn-glycerol) + CoA. It catalyses the reaction 1-(9Z-octadecenoyl)-sn-glycero-3-phospho-(1'-sn-glycerol) + (9Z)-octadecenoyl-CoA = 1,2-di-(9Z-octadecenoyl)-sn-glycero-3-phospho-(1'-sn-glycerol) + CoA. It carries out the reaction 1-hexadecanoyl-sn-glycero-3-phospho-(1D-myo-inositol) + dodecanoyl-CoA = 1-hexadecanoyl-2-dodecanoyl-sn-glycero-3-phospho-(1D-myo-inositol) + CoA. The catalysed reaction is 1',3'-bis-[1-acyl-sn-glycero-3-phospho]-glycerol + (9Z)-octadecenoyl-CoA = 1'-[1-acyl-2-(9Z)-octadecenoyl-sn-glycero-3-phospho],3'-[1-acyl,2-hydroxy-sn-glycero-3-phospho]-glycerol + CoA. The enzyme catalyses 1'-[1,2-diacyl-sn-glycero-3-phospho],3'-[1-acyl-sn-glycero-3-phospho]-glycerol + (9Z)-octadecenoyl-CoA = 1'-[1,2-diacyl-sn-glycero-3-phospho],3'-[1-acyl,2-(9Z)-octadecenoyl-sn-glycero-3-phospho]-glycerol + CoA. It catalyses the reaction 1'-[1,2-diacyl-sn-glycero-3-phospho],3'-[1-acyl-sn-glycero-3-phospho]-glycerol + (9Z,12Z)-octadecadienoyl-CoA = 1'-[1,2-diacyl-sn-glycero-3-phospho],3'-[1-acyl,2-(9Z,12Z)-octadecadienoyl-sn-glycero-3-phospho]-glycerol + CoA. It carries out the reaction 1'-[1,2-diacyl-sn-glycero-3-phospho],3'-[1-acyl-sn-glycero-3-phospho]-glycerol + dodecanoyl-CoA = 1'-[1,2-diacyl-sn-glycero-3-phospho],3'-[1-acyl,2-dodecanoyl-sn-glycero-3-phospho]-glycerol + CoA. The catalysed reaction is 1',3'-bis-[1-acyl-sn-glycero-3-phospho]-glycerol + dodecanoyl-CoA = 1'-[1-acyl-2-dodecanoyl-sn-glycero-3-phospho],3'-[1-acyl,2-hydroxy-sn-glycero-3-phospho]-glycerol + CoA. The enzyme catalyses a 1-acyl-sn-glycero-3-phosphate + (9Z)-octadecenoyl-CoA = a 1-acyl-2-(9Z-octadecenoyl)-sn-glycero-3-phosphate + CoA. It catalyses the reaction 1',3'-bis-[1-acyl-sn-glycero-3-phospho]-glycerol + (9Z,12Z)-octadecadienoyl-CoA = 1'-[1-acyl-2-(9Z,12Z)-octadecadienoyl-sn-glycero-3-phospho],3'-[1-acyl,2-hydroxy-sn-glycero-3-phospho]-glycerol + CoA. It carries out the reaction 1',3'-bis-[1-acyl-sn-glycero-3-phospho]-glycerol + hexadecanoyl-CoA = 1'-[1-acyl-2-hexadecanoyl-sn-glycero-3-phospho],3'-[1-acyl,2-hydroxy-sn-glycero-3-phospho]-glycerol + CoA. The catalysed reaction is 1',3'-bis-[1-acyl-sn-glycero-3-phospho]-glycerol + octadecanoyl-CoA = 1'-[1-acyl-2-octadecanoyl-sn-glycero-3-phospho],3'-[1-acyl,2-hydroxy-sn-glycero-3-phospho]-glycerol + CoA. The enzyme catalyses 1'-[1,2-diacyl-sn-glycero-3-phospho],3'-[1-acyl-sn-glycero-3-phospho]-glycerol + octanoyl-CoA = 1'-[1,2-diacyl-sn-glycero-3-phospho],3'-[1-acyl,2-octanoyl-sn-glycero-3-phospho]-glycerol + CoA. It catalyses the reaction 1',3'-bis-[1-acyl-sn-glycero-3-phospho]-glycerol + octanoyl-CoA = 1'-[1-acyl-2-octanoyl-sn-glycero-3-phospho],3'-[1-acyl,2-hydroxy-sn-glycero-3-phospho]-glycerol + CoA. It carries out the reaction 1'-[1,2-diacyl-sn-glycero-3-phospho],3'-[1-acyl-sn-glycero-3-phospho]-glycerol + hexadecanoyl-CoA = 1'-[1,2-diacyl-sn-glycero-3-phospho],3'-[1-acyl,2-hexadecanoyl-sn-glycero-3-phospho]-glycerol + CoA. The catalysed reaction is 1'-[1,2-diacyl-sn-glycero-3-phospho],3'-[1-acyl-sn-glycero-3-phospho]-glycerol + (5Z,8Z,11Z,14Z)-eicosatetraenoyl-CoA = 1'-[1,2-diacyl-sn-glycero-3-phospho],3'-[1-acyl,2-(5Z,8Z,11Z,14Z)-eicosatetraenoyl-sn-glycero-3-phospho]-glycerol + CoA. The enzyme catalyses 1',3'-bis-[1-acyl-sn-glycero-3-phospho]-glycerol + (5Z,8Z,11Z,14Z)-eicosatetraenoyl-CoA = 1'-[1-acyl-2-(5Z,8Z,11Z,14Z)-eicosatetraenoyl-sn-glycero-3-phospho],3'-[1-acyl,2-hydroxy-sn-glycero-3-phospho]-glycerol + CoA. It catalyses the reaction a 1-acyl-sn-glycero-3-phospho-(1D-myo-inositol) + octadecanoyl-CoA = a 1-acyl-2-octadecanoyl-sn-glycero-3-phospho-(1D-myo-inositol) + CoA. It carries out the reaction a 2-acyl-sn-glycero-3-phospho-D-myo-inositol + octadecanoyl-CoA = 1-octadecanoyl-2-acyl-sn-glycero-3-phospho-1D-myo-inositol + CoA. The protein operates within phospholipid metabolism; CDP-diacylglycerol biosynthesis; CDP-diacylglycerol from sn-glycerol 3-phosphate: step 2/3. Its function is as follows. Exhibits acyl-CoA:lysocardiolipin acyltransferase (ALCAT) activity; catalyzes the reacylation of lyso-cardiolipin to cardiolipin (CL), a key step in CL remodeling. Recognizes both monolysocardiolipin and dilysocardiolipin as substrates with a preference for linoleoyl-CoA and oleoyl-CoA as acyl donors. Also exhibits 1-acyl-sn-glycerol-3-phosphate acyltransferase activity (AGPAT) activity; converts 1-acyl-sn-glycerol-3- phosphate (lysophosphatidic acid or LPA) into 1,2-diacyl-sn-glycerol-3- phosphate (phosphatidic acid or PA) by incorporating an acyl moiety at the sn-2 position of the glycerol backbone. Possesses both lysophosphatidylinositol acyltransferase (LPIAT) and lysophosphatidylglycerol acyltransferase (LPGAT) activities. Required for establishment of the hematopoietic and endothelial lineages. In Danio rerio (Zebrafish), this protein is Lysocardiolipin acyltransferase 1 (lclat1).